We begin with the raw amino-acid sequence, 551 residues long: Chaperonin GroEL (551 aa).

Residues 30–33, Lys51, 87–91, Gly415, 478–480, and Asp494 each bind ATP; these read TLGP, DGTTT, and NAA.

It belongs to the chaperonin (HSP60) family. In terms of assembly, forms a cylinder of 14 subunits composed of two heptameric rings stacked back-to-back. Interacts with the co-chaperonin GroES.

Its subcellular location is the cytoplasm. It carries out the reaction ATP + H2O + a folded polypeptide = ADP + phosphate + an unfolded polypeptide.. In terms of biological role, together with its co-chaperonin GroES, plays an essential role in assisting protein folding. The GroEL-GroES system forms a nano-cage that allows encapsulation of the non-native substrate proteins and provides a physical environment optimized to promote and accelerate protein folding. The protein is Chaperonin GroEL of Syntrophotalea carbinolica (strain DSM 2380 / NBRC 103641 / GraBd1) (Pelobacter carbinolicus).